An 801-amino-acid polypeptide reads, in one-letter code: Phenylalanine--tRNA ligase beta subunit (801 aa).

The tRNA-binding domain occupies 39–153; it reads AEGLSKLVVG…EDAVPGESIF (115 aa). The region spanning 406–481 is the B5 domain; sequence TDDIQVSTSL…RIYGYDKLPT (76 aa). Positions 459, 465, 468, and 469 each coordinate Mg(2+). An FDX-ACB domain is found at 708–801; that stretch reads TKFPAVSRDI…LTEKVGAEVR (94 aa).

It belongs to the phenylalanyl-tRNA synthetase beta subunit family. Type 1 subfamily. In terms of assembly, tetramer of two alpha and two beta subunits. Mg(2+) is required as a cofactor.

It is found in the cytoplasm. It catalyses the reaction tRNA(Phe) + L-phenylalanine + ATP = L-phenylalanyl-tRNA(Phe) + AMP + diphosphate + H(+). This Streptococcus mutans serotype c (strain ATCC 700610 / UA159) protein is Phenylalanine--tRNA ligase beta subunit.